The chain runs to 612 residues: Phosphomethylpyrimidine synthase (612 aa).

Disordered stretches follow at residues Met1 to Gly33 and Ala105 to Asn146. Residues Thr12 to Thr24 are compositionally biased toward low complexity. Residues Ala105–Lys117 show a composition bias toward basic and acidic residues. Residues Asn213, Met242, Tyr271, His307, Ser327–Gly329, Asp368–Arg371, and Glu407 each bind substrate. His411 provides a ligand contact to Zn(2+). Tyr434 lines the substrate pocket. His475 provides a ligand contact to Zn(2+). Cys555, Cys558, and Cys563 together coordinate [4Fe-4S] cluster.

Belongs to the ThiC family. [4Fe-4S] cluster serves as cofactor.

The enzyme catalyses 5-amino-1-(5-phospho-beta-D-ribosyl)imidazole + S-adenosyl-L-methionine = 4-amino-2-methyl-5-(phosphooxymethyl)pyrimidine + CO + 5'-deoxyadenosine + formate + L-methionine + 3 H(+). It participates in cofactor biosynthesis; thiamine diphosphate biosynthesis. Catalyzes the synthesis of the hydroxymethylpyrimidine phosphate (HMP-P) moiety of thiamine from aminoimidazole ribotide (AIR) in a radical S-adenosyl-L-methionine (SAM)-dependent reaction. In Streptomyces coelicolor (strain ATCC BAA-471 / A3(2) / M145), this protein is Phosphomethylpyrimidine synthase.